Reading from the N-terminus, the 486-residue chain is Hematopoietic lineage cell-specific protein (486 aa).

Positions 27–66 are involved in HAX-1 binding; sequence FVNDISEKEQRWGAKTIEGSGRTEHINIHQLRNKVSEEHD. Lys41 carries the post-translational modification N6-acetyllysine. Cortactin repeat units lie at residues 79 to 115, 116 to 152, and 153 to 189; these read ASHGYGGRFGVERDRMDKSAVGHEYVAEVEKHSSQTD, AAKGFGGKYGVERDRADKSAVGFDYKGEVEKHTSQKD, and YSRGFGGRYGVEKDKWDKAALGYDYKGETEKHESQRD. At Lys123 the chain carries N6-acetyllysine. The residue at position 140 (Tyr140) is a Phosphotyrosine. The stretch at 190-212 is one Cortactin 4; truncated repeat; the sequence is YAKGFGGQYGIQKDRVDKSAVGF. Lys192 is modified (N6-acetyllysine). Residue Tyr198 is modified to Phosphotyrosine. Residue Tyr222 is modified to Phosphotyrosine; by FGR. Lys241 is modified (N6-acetyllysine). A compositionally biased stretch (basic and acidic residues) spans 243-276; sequence ESMAEEKRKREEEEKAQQVARRQQERKAVTKRSP. The segment at 243–419 is disordered; the sequence is ESMAEEKRKR…SALAGSSGCP (177 aa). Position 275 is a phosphoserine (Ser275). Residue Thr308 is modified to Phosphothreonine. Basic and acidic residues predominate over residues 315 to 324; the sequence is EPVRTSREHP. Composition is skewed to acidic residues over residues 353–383 and 390–405; these read QVEEEPVYEAEPEPEPEPEPEPENDYEDVEE and EDEPEGDYEEVLEPED. Tyr378 and Tyr397 each carry phosphotyrosine; by SYK and FES. A compositionally biased stretch (low complexity) spans 406–419; the sequence is SSFSSALAGSSGCP. In terms of domain architecture, SH3 spans 428 to 486; it reads ALGISAVAVYDYQGEGSDELSFDPDDVITDIEMVDEGWWRGRCHGHFGLFPANYVKLLE.

In terms of assembly, associates with the SH2 and SH3 domains of LCK. Binding to he LCK SH3 domain occurs constitutively, while binding to the LCK SH2 domain occurs only upon TCR stimulation. A similar binding pattern was observed with LYN, but not with FYN in which the FYN SH2 region associates upon TCR stimulation but the FYN SH3 region does not associate regardless of TCR stimulation. Directly associates with HAX1, through binding to its C-terminal region. Interacts with HS1BP3. Interacts with FES/FPS. Interacts (via SH2 domain) with FGR. Forms a multiprotein complex with LYN and ANKRD54. Phosphorylated by FES. Phosphorylated by LYN, FYN and FGR after cross-linking of surface IgM on B-cells. Phosphorylation by LYN, FYN and FGR requires prior phosphorylation by SYK or FES. As to expression, expressed only in tissues and cells of hematopoietic origin.

It is found in the membrane. It localises to the cytoplasm. Its subcellular location is the mitochondrion. Its function is as follows. Substrate of the antigen receptor-coupled tyrosine kinase. Plays a role in antigen receptor signaling for both clonal expansion and deletion in lymphoid cells. May also be involved in the regulation of gene expression. The protein is Hematopoietic lineage cell-specific protein (HCLS1) of Homo sapiens (Human).